The sequence spans 513 residues: Cobyric acid synthase (513 aa).

The 201-residue stretch at 270-470 folds into the GATase cobBQ-type domain; sequence RLRIAIVAYP…THGLFESPAV (201 aa). C351 acts as the Nucleophile in catalysis. The active site involves H462.

This sequence belongs to the CobB/CobQ family. CobQ subfamily.

It participates in cofactor biosynthesis; adenosylcobalamin biosynthesis. Catalyzes amidations at positions B, D, E, and G on adenosylcobyrinic A,C-diamide. NH(2) groups are provided by glutamine, and one molecule of ATP is hydrogenolyzed for each amidation. In Leptothrix cholodnii (strain ATCC 51168 / LMG 8142 / SP-6) (Leptothrix discophora (strain SP-6)), this protein is Cobyric acid synthase.